Consider the following 104-residue polypeptide: Small ribosomal subunit protein uS10 (104 aa).

Belongs to the universal ribosomal protein uS10 family. In terms of assembly, part of the 30S ribosomal subunit.

Involved in the binding of tRNA to the ribosomes. The sequence is that of Small ribosomal subunit protein uS10 from Gloeobacter violaceus (strain ATCC 29082 / PCC 7421).